The primary structure comprises 128 residues: Gene 64 protein (128 aa).

In Mycobacterium phage L5 (Mycobacteriophage L5), this protein is Gene 64 protein (64).